Reading from the N-terminus, the 85-residue chain is MAHKKGQGSTQNNRDSIGRRLGVKKFGGEFVRAGNIIIRQRGTATHPGNNVGIGRDHTIFALVDGFVKFERKDKDRKKVSVYPAA.

It belongs to the bacterial ribosomal protein bL27 family.

This Campylobacter fetus subsp. fetus (strain 82-40) protein is Large ribosomal subunit protein bL27.